A 368-amino-acid chain; its full sequence is 3-dehydroquinate synthase (368 aa).

NAD(+)-binding positions include 71–76, 105–109, 129–130, Lys-142, and Lys-151; these read DGEAAK, GATTD, and TT. The Zn(2+) site is built by Glu-184, His-247, and His-263.

The protein belongs to the sugar phosphate cyclases superfamily. Dehydroquinate synthase family. It depends on Co(2+) as a cofactor. The cofactor is Zn(2+). NAD(+) is required as a cofactor.

It is found in the cytoplasm. The catalysed reaction is 7-phospho-2-dehydro-3-deoxy-D-arabino-heptonate = 3-dehydroquinate + phosphate. Its pathway is metabolic intermediate biosynthesis; chorismate biosynthesis; chorismate from D-erythrose 4-phosphate and phosphoenolpyruvate: step 2/7. In terms of biological role, catalyzes the conversion of 3-deoxy-D-arabino-heptulosonate 7-phosphate (DAHP) to dehydroquinate (DHQ). The chain is 3-dehydroquinate synthase from Thermobifida fusca (strain YX).